The sequence spans 390 residues: Putative nickel insertion protein (390 aa).

Belongs to the LarC family.

This Geobacter metallireducens (strain ATCC 53774 / DSM 7210 / GS-15) protein is Putative nickel insertion protein.